The following is a 398-amino-acid chain: O-methyltransferase hmp5 (398 aa).

Residues 233–234, E261, and 283–284 contribute to the S-adenosyl-L-methionine site; these read GG and DF. The active-site Proton acceptor is the H303.

Belongs to the class I-like SAM-binding methyltransferase superfamily. Cation-independent O-methyltransferase family.

The protein operates within secondary metabolite biosynthesis. O-methyltransferase; part of the gene cluster that mediates the biosynthesis of hypothemycin, a resorcylic acid lactone (RAL) that irreversibly inhibits a subset of protein kinases with a conserved cysteine in the ATP binding site such as human ERK2. The first step is performed by both PKSs hmp3 and hmp8 and leads to the production of 7',8'-dehydrozearalenol (DHZ). The highly reducing PKS hpm8 synthesizes the reduced hexaketide (7S,11S,2E,8E)-7,11-dihydroxy-dodeca-2,8-dienoate, which is transferred downstream to the non-reducing PKS hpm3. Hpm3 then extends the reduced hexaketide to a nonaketide, after which regioselective cyclization and macrolactonization affords DHZ. The next step is the conversion of DHZ into aigialomycin C and is performed by the O-methyltransferase hmp5, the FAD-binding monooxygenase hmp7, and the cytochrome P450 monooxygenase hmp1. The wide substrate tolerance of the hmp5 and hmp7 implies that the reactions from DHZ to aigialomycin C can occur in any order. The steps from aigialomycin C to hypothemycin are less well established. The FAD-linked oxidoreductase hmp9 presumably catalyzes oxidation of the C-6' hydroxyl to a ketone. The timing of this oxidation is important, since the resulting enone functional group is a Michael acceptor that can react spontaneously with glutathione, an abundant metabolite in fungal cells. The glutathione S-transferase hmp2 catalyzes cis-trans isomerization of the 7',8' double bond with equilibrium favoring the trans isomer. The hpm6-encoded transporter might preferentially pump hypothemycin out of the cell relative to the trans isomer aigialomycin A. The cis-to-trans isomerization may be coupled with C-4' hydroxylation, since all known hypothemycin analogs containing the enone functional group also have hydroxyl groups at both C-4' and C-5'. The protein is O-methyltransferase hmp5 of Hypomyces subiculosus (Nectria subiculosa).